Reading from the N-terminus, the 138-residue chain is Gap junction alpha-4 protein (138 aa).

The Cytoplasmic portion of the chain corresponds to 1–16; it reads DWGFLEKLLDQVQEHS. Residues 17-39 form a helical membrane-spanning segment; sequence TVVGKIWLTVLFIFRILILGLAG. The Extracellular segment spans residues 40-74; that stretch reads ESVWGDEQSDFECNTAQPGCTNVCYDQAFPISHIP. Residues 75–97 traverse the membrane as a helical segment; the sequence is YWVLQFLFVSTPTLVYLGHVIYL. Topologically, residues 98–138 are cytoplasmic; it reads SRREERLRQKEGELRALPDKDPRVERALAGIERQMAKISVA.

Belongs to the connexin family. Alpha-type (group II) subfamily. A connexon is composed of a hexamer of connexins.

Its subcellular location is the cell membrane. It localises to the cell junction. It is found in the gap junction. One gap junction consists of a cluster of closely packed pairs of transmembrane channels, the connexons, through which materials of low MW diffuse from one cell to a neighboring cell. This Sus scrofa (Pig) protein is Gap junction alpha-4 protein (GJA4).